Here is a 500-residue protein sequence, read N- to C-terminus: Lysine--tRNA ligase (500 aa).

The Mg(2+) site is built by Glu410 and Glu417.

Belongs to the class-II aminoacyl-tRNA synthetase family. In terms of assembly, homodimer. The cofactor is Mg(2+).

The protein localises to the cytoplasm. It catalyses the reaction tRNA(Lys) + L-lysine + ATP = L-lysyl-tRNA(Lys) + AMP + diphosphate. The protein is Lysine--tRNA ligase of Mycoplasma mycoides subsp. mycoides SC (strain CCUG 32753 / NCTC 10114 / PG1).